A 147-amino-acid polypeptide reads, in one-letter code: Large ribosomal subunit protein bL9 (147 aa).

It belongs to the bacterial ribosomal protein bL9 family.

Its function is as follows. Binds to the 23S rRNA. In Geotalea daltonii (strain DSM 22248 / JCM 15807 / FRC-32) (Geobacter daltonii), this protein is Large ribosomal subunit protein bL9.